The following is an 820-amino-acid chain: Leucine--tRNA ligase (820 aa).

Residues 40-51 (PYPSGAGLHVGH) carry the 'HIGH' region motif. Residues 601–605 (KMSKS) carry the 'KMSKS' region motif. Residue K604 participates in ATP binding.

It belongs to the class-I aminoacyl-tRNA synthetase family.

It is found in the cytoplasm. It carries out the reaction tRNA(Leu) + L-leucine + ATP = L-leucyl-tRNA(Leu) + AMP + diphosphate. The chain is Leucine--tRNA ligase from Chlamydia caviae (strain ATCC VR-813 / DSM 19441 / 03DC25 / GPIC) (Chlamydophila caviae).